The following is a 181-amino-acid chain: ATP synthase subunit delta (181 aa).

The protein belongs to the ATPase delta chain family. As to quaternary structure, F-type ATPases have 2 components, F(1) - the catalytic core - and F(0) - the membrane proton channel. F(1) has five subunits: alpha(3), beta(3), gamma(1), delta(1), epsilon(1). F(0) has three main subunits: a(1), b(2) and c(10-14). The alpha and beta chains form an alternating ring which encloses part of the gamma chain. F(1) is attached to F(0) by a central stalk formed by the gamma and epsilon chains, while a peripheral stalk is formed by the delta and b chains.

The protein localises to the cell membrane. Its function is as follows. F(1)F(0) ATP synthase produces ATP from ADP in the presence of a proton or sodium gradient. F-type ATPases consist of two structural domains, F(1) containing the extramembraneous catalytic core and F(0) containing the membrane proton channel, linked together by a central stalk and a peripheral stalk. During catalysis, ATP synthesis in the catalytic domain of F(1) is coupled via a rotary mechanism of the central stalk subunits to proton translocation. This protein is part of the stalk that links CF(0) to CF(1). It either transmits conformational changes from CF(0) to CF(1) or is implicated in proton conduction. The polypeptide is ATP synthase subunit delta (Mycoplasmoides gallisepticum (strain R(low / passage 15 / clone 2)) (Mycoplasma gallisepticum)).